The following is a 328-amino-acid chain: DNA polymerase IV (328 aa).

One can recognise a UmuC domain in the interval 6 to 187; the sequence is IIHIDMDYFF…LDIGDFPGVG (182 aa). Residues D10 and D105 each coordinate Mg(2+). E106 is a catalytic residue.

Belongs to the DNA polymerase type-Y family. Monomer. Mg(2+) is required as a cofactor.

The protein resides in the cytoplasm. The catalysed reaction is DNA(n) + a 2'-deoxyribonucleoside 5'-triphosphate = DNA(n+1) + diphosphate. Its function is as follows. Poorly processive, error-prone DNA polymerase involved in untargeted mutagenesis. Copies undamaged DNA at stalled replication forks, which arise in vivo from mismatched or misaligned primer ends. These misaligned primers can be extended by PolIV. Exhibits no 3'-5' exonuclease (proofreading) activity. May be involved in translesional synthesis, in conjunction with the beta clamp from PolIII. This chain is DNA polymerase IV, found in Staphylococcus aureus (strain bovine RF122 / ET3-1).